A 1113-amino-acid chain; its full sequence is Protein MGA2 (1113 aa).

Positions 91–114 are disordered; it reads TPLEEEMESNRALKEEEEDEHENK. Ser-255 is modified (phosphoserine). 2 stretches are compositionally biased toward polar residues: residues 344 to 357 and 437 to 452; these read DTTKFNNTTTSSRR and HIPSPTSMSEEGSESF. Disordered regions lie at residues 344–376 and 437–462; these read DTTKFNNTTTSSRRQLTEEESTTEYYSTDNNQL and HIPSPTSMSEEGSESFNYHHRDNDNP. Phosphoserine is present on Ser-467. One can recognise an IPT/TIG domain in the interval 530 to 610; the sequence is PSINRVIPSQ…NENNNDDLPQ (81 aa). Residues 658–687 are disordered; it reads IVGNDSPDSGTNGNSCSKSTGPSPNQHSMN. The span at 663 to 687 shows a compositional bias: polar residues; it reads SPDSGTNGNSCSKSTGPSPNQHSMN. ANK repeat units follow at residues 719–748 and 752–781; these read LGRTLLHLACLKNYSSLVYTLIKKGARVND and FGLTPLHFACISGDPKIIKMLLNCKVNYSL. A helical transmembrane segment spans residues 1037-1054; the sequence is MLIFFWIPLTLLLLTWFI.

The protein localises to the membrane. The polypeptide is Protein MGA2 (MGA2) (Saccharomyces cerevisiae (strain ATCC 204508 / S288c) (Baker's yeast)).